A 187-amino-acid chain; its full sequence is Ribosome-recycling factor (187 aa).

Belongs to the RRF family.

The protein resides in the cytoplasm. Responsible for the release of ribosomes from messenger RNA at the termination of protein biosynthesis. May increase the efficiency of translation by recycling ribosomes from one round of translation to another. This is Ribosome-recycling factor from Parvibaculum lavamentivorans (strain DS-1 / DSM 13023 / NCIMB 13966).